We begin with the raw amino-acid sequence, 61 residues long: Small ribosomal subunit protein uS14 (61 aa).

The Zn(2+) site is built by cysteine 24, cysteine 27, cysteine 40, and cysteine 43.

It belongs to the universal ribosomal protein uS14 family. Zinc-binding uS14 subfamily. In terms of assembly, part of the 30S ribosomal subunit. Contacts proteins S3 and S10. The cofactor is Zn(2+).

Its function is as follows. Binds 16S rRNA, required for the assembly of 30S particles and may also be responsible for determining the conformation of the 16S rRNA at the A site. This chain is Small ribosomal subunit protein uS14, found in Thermodesulfovibrio yellowstonii (strain ATCC 51303 / DSM 11347 / YP87).